The chain runs to 327 residues: tRNA dimethylallyltransferase (327 aa).

Position 14 to 21 (14 to 21) interacts with ATP; the sequence is GPTASGKT. 16 to 21 is a substrate binding site; sequence TASGKT. Interaction with substrate tRNA stretches follow at residues 39 to 42 and 163 to 167; these read DSAL and QRIQR.

It belongs to the IPP transferase family. In terms of assembly, monomer. The cofactor is Mg(2+).

It catalyses the reaction adenosine(37) in tRNA + dimethylallyl diphosphate = N(6)-dimethylallyladenosine(37) in tRNA + diphosphate. Catalyzes the transfer of a dimethylallyl group onto the adenine at position 37 in tRNAs that read codons beginning with uridine, leading to the formation of N6-(dimethylallyl)adenosine (i(6)A). The protein is tRNA dimethylallyltransferase of Xanthomonas oryzae pv. oryzae (strain MAFF 311018).